Here is a 110-residue protein sequence, read N- to C-terminus: Keratin-associated protein 6-3 (110 aa).

The protein belongs to the KRTAP type 6 family. Interacts with hair keratins.

In terms of biological role, in the hair cortex, hair keratin intermediate filaments are embedded in an interfilamentous matrix, consisting of hair keratin-associated proteins (KRTAP), which are essential for the formation of a rigid and resistant hair shaft through their extensive disulfide bond cross-linking with abundant cysteine residues of hair keratins. The matrix proteins include the high-sulfur and high-glycine-tyrosine keratins. The sequence is that of Keratin-associated protein 6-3 from Homo sapiens (Human).